The sequence spans 417 residues: NADH-quinone oxidoreductase subunit D (417 aa).

This sequence belongs to the complex I 49 kDa subunit family. As to quaternary structure, NDH-1 is composed of 14 different subunits. Subunits NuoB, C, D, E, F, and G constitute the peripheral sector of the complex.

It localises to the cell inner membrane. It carries out the reaction a quinone + NADH + 5 H(+)(in) = a quinol + NAD(+) + 4 H(+)(out). Functionally, NDH-1 shuttles electrons from NADH, via FMN and iron-sulfur (Fe-S) centers, to quinones in the respiratory chain. The immediate electron acceptor for the enzyme in this species is believed to be ubiquinone. Couples the redox reaction to proton translocation (for every two electrons transferred, four hydrogen ions are translocated across the cytoplasmic membrane), and thus conserves the redox energy in a proton gradient. The polypeptide is NADH-quinone oxidoreductase subunit D (Burkholderia mallei (strain NCTC 10247)).